A 155-amino-acid chain; its full sequence is Ribosomal RNA large subunit methyltransferase H (155 aa).

S-adenosyl-L-methionine-binding positions include L73, G104, and 123–128; that span reads LSPLTL.

It belongs to the RNA methyltransferase RlmH family. Homodimer.

It is found in the cytoplasm. It carries out the reaction pseudouridine(1915) in 23S rRNA + S-adenosyl-L-methionine = N(3)-methylpseudouridine(1915) in 23S rRNA + S-adenosyl-L-homocysteine + H(+). Its function is as follows. Specifically methylates the pseudouridine at position 1915 (m3Psi1915) in 23S rRNA. The chain is Ribosomal RNA large subunit methyltransferase H from Pseudomonas entomophila (strain L48).